The sequence spans 444 residues: UDP-N-acetylmuramoylalanine--D-glutamate ligase (444 aa).

Residue 118 to 124 (GTNGKTT) coordinates ATP.

It belongs to the MurCDEF family.

The protein resides in the cytoplasm. The enzyme catalyses UDP-N-acetyl-alpha-D-muramoyl-L-alanine + D-glutamate + ATP = UDP-N-acetyl-alpha-D-muramoyl-L-alanyl-D-glutamate + ADP + phosphate + H(+). The protein operates within cell wall biogenesis; peptidoglycan biosynthesis. Functionally, cell wall formation. Catalyzes the addition of glutamate to the nucleotide precursor UDP-N-acetylmuramoyl-L-alanine (UMA). In Protochlamydia amoebophila (strain UWE25), this protein is UDP-N-acetylmuramoylalanine--D-glutamate ligase.